The following is a 292-amino-acid chain: Bifunctional protein FolD (292 aa).

NADP(+)-binding positions include 166-168 (GRS), S191, and I232.

Belongs to the tetrahydrofolate dehydrogenase/cyclohydrolase family. As to quaternary structure, homodimer.

The catalysed reaction is (6R)-5,10-methylene-5,6,7,8-tetrahydrofolate + NADP(+) = (6R)-5,10-methenyltetrahydrofolate + NADPH. The enzyme catalyses (6R)-5,10-methenyltetrahydrofolate + H2O = (6R)-10-formyltetrahydrofolate + H(+). It participates in one-carbon metabolism; tetrahydrofolate interconversion. Functionally, catalyzes the oxidation of 5,10-methylenetetrahydrofolate to 5,10-methenyltetrahydrofolate and then the hydrolysis of 5,10-methenyltetrahydrofolate to 10-formyltetrahydrofolate. In Synechococcus sp. (strain RCC307), this protein is Bifunctional protein FolD.